The chain runs to 292 residues: Cyclin-dependent kinase 5 (292 aa).

The Protein kinase domain occupies 4–286 (YEKLEKIGEG…AEEALQHPYF (283 aa)). ATP-binding positions include 10-18 (IGEGTYGTV) and K33. Phosphotyrosine; by ABL1, EPHA4 and FYN is present on Y15. A Phosphothreonine modification is found at T17. N6-acetyllysine is present on K56. At S72 the chain carries Phosphoserine. Residue D126 is the Proton acceptor of the active site. S159 is modified (phosphoserine).

Belongs to the protein kinase superfamily. CMGC Ser/Thr protein kinase family. CDC2/CDKX subfamily. Heterodimer composed of a catalytic subunit CDK5 and a regulatory subunit CDK5R1 (p25) and macromolecular complex composed of at least CDK5, CDK5R1 (p35) and CDK5RAP1 or CDK5RAP2 or CDK5RAP3. Only the heterodimer shows kinase activity. Under neurotoxic stress and neuronal injury conditions, p35 is cleaved by calpain to generate p25 that hyperactivates CDK5, that becomes functionally disabled and often toxic. Found in a trimolecular complex with CABLES1 and ABL1. Interacts with CABLES1 and CABLES2. Interacts with AATK and GSTP1. Binds to HDAC1 when in complex with p25. Interaction with myristoylation p35 promotes CDK5 association with membranes. Both isoforms 1 and 2 interacts with beta-catenin/CTNNB1. Interacts with delta-catenin/CTNND2 and APEX1. Interacts with P53/TP53 in neurons. Interacts with PTK2/FAK1. Interacts with EPHA4; may mediate the activation of NGEF by EPHA4. The complex p35/CDK5 interacts with CLOCK. Interacts with HTR6. Post-translationally, phosphorylation on Tyr-15 by ABL1 and FYN, and on Ser-159 by casein kinase 1 promotes kinase activity. By contrast, phosphorylation at Thr-14 inhibits activity. In terms of processing, phosphorylation at Ser-159 is essential for maximal catalytic activity. Expressed in hippocampal neuronal synaptic termini (at protein level). Expressed predominantly in post-mitotic neurons of the central and peripheral nervous system.

The protein localises to the cytoplasm. It localises to the nucleus. It is found in the cell membrane. The protein resides in the perikaryon. Its subcellular location is the cell projection. The protein localises to the lamellipodium. It localises to the growth cone. It is found in the postsynaptic density. The protein resides in the synapse. It carries out the reaction L-seryl-[protein] + ATP = O-phospho-L-seryl-[protein] + ADP + H(+). The enzyme catalyses L-threonyl-[protein] + ATP = O-phospho-L-threonyl-[protein] + ADP + H(+). With respect to regulation, inhibited by 2-(1-ethyl-2-hydroxyethylamino)-6-benzylamino-9-isopropylpurine (roscovitine), 1-isopropyl-4-aminobenzyl-6-ether-linked benzimidazoles, resveratrol, AT-7519 and olomoucine. Activated by CDK5R1 (p35) and CDK5R2 (p39) during the development of the nervous system; degradation of CDK5R1 (p35) and CDK5R2 (p39) by proteasome result in down regulation of kinase activity, during this process, CDK5 phosphorylates p35 and induces its ubiquitination and subsequent degradation. Kinase activity is mainly determined by the amount of p35 available and subcellular location; reversible association to plasma membrane inhibits activity. Long-term inactivation as well as CDK5R1 (p25)-mediated hyperactivation of CDK5 triggers cell death. The pro-death activity of hyperactivated CDK5 is suppressed by membrane association of CDK5, via myristoylation of p35. Brain-derived neurotrophic factor, glial-derived neurotrophic factor, nerve growth factor (NGF), retinoic acid, laminin and neuregulin promote activity. Neurotoxicity enhances nuclear activity, thus leading to MEF2 phosphorylation and inhibition prior to apoptosis of cortical neurons. Repression by GSTP1 via p25/p35 translocation prevents neurodegeneration. Its function is as follows. Proline-directed serine/threonine-protein kinase essential for neuronal cell cycle arrest and differentiation and may be involved in apoptotic cell death in neuronal diseases by triggering abortive cell cycle re-entry. Interacts with D1 and D3-type G1 cyclins. Phosphorylates SRC, NOS3, VIM/vimentin, p35/CDK5R1, MEF2A, SIPA1L1, SH3GLB1, PXN, PAK1, MCAM/MUC18, SEPT5, SYN1, DNM1, AMPH, SYNJ1, CDK16, RAC1, RHOA, CDC42, TONEBP/NFAT5, MAPT/TAU, MAP1B, histone H1, p53/TP53, HDAC1, APEX1, PTK2/FAK1, huntingtin/HTT, ATM, MAP2, NEFH and NEFM. Regulates several neuronal development and physiological processes including neuronal survival, migration and differentiation, axonal and neurite growth, synaptogenesis, oligodendrocyte differentiation, synaptic plasticity and neurotransmission, by phosphorylating key proteins. Negatively regulates the CACNA1B/CAV2.2 -mediated Ca(2+) release probability at hippocampal neuronal soma and synaptic terminals. Activated by interaction with CDK5R1 (p35) and CDK5R2 (p39), especially in postmitotic neurons, and promotes CDK5R1 (p35) expression in an autostimulation loop. Phosphorylates many downstream substrates such as Rho and Ras family small GTPases (e.g. PAK1, RAC1, RHOA, CDC42) or microtubule-binding proteins (e.g. MAPT/TAU, MAP2, MAP1B), and modulates actin dynamics to regulate neurite growth and/or spine morphogenesis. Also phosphorylates exocytosis associated proteins such as MCAM/MUC18, SEPT5, SYN1, and CDK16/PCTAIRE1 as well as endocytosis associated proteins such as DNM1, AMPH and SYNJ1 at synaptic terminals. In the mature central nervous system (CNS), regulates neurotransmitter movements by phosphorylating substrates associated with neurotransmitter release and synapse plasticity; synaptic vesicle exocytosis, vesicles fusion with the presynaptic membrane, and endocytosis. Promotes cell survival by activating anti-apoptotic proteins BCL2 and STAT3, and negatively regulating of JNK3/MAPK10 activity. Phosphorylation of p53/TP53 in response to genotoxic and oxidative stresses enhances its stabilization by preventing ubiquitin ligase-mediated proteasomal degradation, and induces transactivation of p53/TP53 target genes, thus regulating apoptosis. Phosphorylation of p35/CDK5R1 enhances its stabilization by preventing calpain-mediated proteolysis producing p25/CDK5R1 and avoiding ubiquitin ligase-mediated proteasomal degradation. During aberrant cell-cycle activity and DNA damage, p25/CDK5 activity elicits cell-cycle activity and double-strand DNA breaks that precedes neuronal death by deregulating HDAC1. DNA damage triggered phosphorylation of huntingtin/HTT in nuclei of neurons protects neurons against polyglutamine expansion as well as DNA damage mediated toxicity. Phosphorylation of PXN reduces its interaction with PTK2/FAK1 in matrix-cell focal adhesions (MCFA) during oligodendrocytes (OLs) differentiation. Negative regulator of Wnt/beta-catenin signaling pathway. Activator of the GAIT (IFN-gamma-activated inhibitor of translation) pathway, which suppresses expression of a post-transcriptional regulon of proinflammatory genes in myeloid cells; phosphorylates the linker domain of glutamyl-prolyl tRNA synthetase (EPRS) in a IFN-gamma-dependent manner, the initial event in assembly of the GAIT complex. Phosphorylation of SH3GLB1 is required for autophagy induction in starved neurons. Phosphorylation of TONEBP/NFAT5 in response to osmotic stress mediates its rapid nuclear localization. MEF2 is inactivated by phosphorylation in nucleus in response to neurotoxin, thus leading to neuronal apoptosis. APEX1 AP-endodeoxyribonuclease is repressed by phosphorylation, resulting in accumulation of DNA damage and contributing to neuronal death. NOS3 phosphorylation down regulates NOS3-derived nitrite (NO) levels. SRC phosphorylation mediates its ubiquitin-dependent degradation and thus leads to cytoskeletal reorganization. May regulate endothelial cell migration and angiogenesis via the modulation of lamellipodia formation. Involved in dendritic spine morphogenesis by mediating the EFNA1-EPHA4 signaling. The complex p35/CDK5 participates in the regulation of the circadian clock by modulating the function of CLOCK protein: phosphorylates CLOCK at 'Thr-451' and 'Thr-461' and regulates the transcriptional activity of the CLOCK-BMAL1 heterodimer in association with altered stability and subcellular distribution. In Rattus norvegicus (Rat), this protein is Cyclin-dependent kinase 5.